The sequence spans 279 residues: Tryptophan synthase alpha chain (279 aa).

Active-site proton acceptor residues include glutamate 50 and aspartate 61.

The protein belongs to the TrpA family. In terms of assembly, tetramer of two alpha and two beta chains.

The enzyme catalyses (1S,2R)-1-C-(indol-3-yl)glycerol 3-phosphate + L-serine = D-glyceraldehyde 3-phosphate + L-tryptophan + H2O. Its pathway is amino-acid biosynthesis; L-tryptophan biosynthesis; L-tryptophan from chorismate: step 5/5. Its function is as follows. The alpha subunit is responsible for the aldol cleavage of indoleglycerol phosphate to indole and glyceraldehyde 3-phosphate. The chain is Tryptophan synthase alpha chain from Brucella melitensis biotype 2 (strain ATCC 23457).